A 145-amino-acid chain; its full sequence is D-aminoacyl-tRNA deacylase (145 aa).

The Gly-cisPro motif, important for rejection of L-amino acids motif lies at 137–138 (GP).

The protein belongs to the DTD family. Homodimer.

The protein localises to the cytoplasm. The catalysed reaction is glycyl-tRNA(Ala) + H2O = tRNA(Ala) + glycine + H(+). It carries out the reaction a D-aminoacyl-tRNA + H2O = a tRNA + a D-alpha-amino acid + H(+). Its function is as follows. An aminoacyl-tRNA editing enzyme that deacylates mischarged D-aminoacyl-tRNAs. Also deacylates mischarged glycyl-tRNA(Ala), protecting cells against glycine mischarging by AlaRS. Acts via tRNA-based rather than protein-based catalysis; rejects L-amino acids rather than detecting D-amino acids in the active site. By recycling D-aminoacyl-tRNA to D-amino acids and free tRNA molecules, this enzyme counteracts the toxicity associated with the formation of D-aminoacyl-tRNA entities in vivo and helps enforce protein L-homochirality. This Citrobacter koseri (strain ATCC BAA-895 / CDC 4225-83 / SGSC4696) protein is D-aminoacyl-tRNA deacylase.